A 200-amino-acid polypeptide reads, in one-letter code: 3-isopropylmalate dehydratase small subunit (200 aa).

The protein belongs to the LeuD family. LeuD type 1 subfamily. As to quaternary structure, heterodimer of LeuC and LeuD.

It catalyses the reaction (2R,3S)-3-isopropylmalate = (2S)-2-isopropylmalate. It participates in amino-acid biosynthesis; L-leucine biosynthesis; L-leucine from 3-methyl-2-oxobutanoate: step 2/4. Functionally, catalyzes the isomerization between 2-isopropylmalate and 3-isopropylmalate, via the formation of 2-isopropylmaleate. The sequence is that of 3-isopropylmalate dehydratase small subunit from Actinobacillus succinogenes (strain ATCC 55618 / DSM 22257 / CCUG 43843 / 130Z).